A 299-amino-acid chain; its full sequence is Aspartate carbamoyltransferase catalytic subunit (299 aa).

Carbamoyl phosphate-binding residues include Arg-54 and Thr-55. L-aspartate is bound at residue Lys-83. Carbamoyl phosphate-binding residues include Arg-104, His-132, and Gln-135. Arg-165 and Arg-222 together coordinate L-aspartate. Residues Leu-261 and Pro-262 each contribute to the carbamoyl phosphate site.

It belongs to the aspartate/ornithine carbamoyltransferase superfamily. ATCase family. As to quaternary structure, heterooligomer of catalytic and regulatory chains.

It catalyses the reaction carbamoyl phosphate + L-aspartate = N-carbamoyl-L-aspartate + phosphate + H(+). It functions in the pathway pyrimidine metabolism; UMP biosynthesis via de novo pathway; (S)-dihydroorotate from bicarbonate: step 2/3. In terms of biological role, catalyzes the condensation of carbamoyl phosphate and aspartate to form carbamoyl aspartate and inorganic phosphate, the committed step in the de novo pyrimidine nucleotide biosynthesis pathway. The polypeptide is Aspartate carbamoyltransferase catalytic subunit (Archaeoglobus fulgidus (strain ATCC 49558 / DSM 4304 / JCM 9628 / NBRC 100126 / VC-16)).